The chain runs to 110 residues: Large ribosomal subunit protein P2 (110 aa).

Ser59 carries the O-(pantetheine 4'-phosphoryl)serine; in acyl carrier protein form modification. Residues 62-110 (LASVPSGGAAPAAAAGGAAAGGAAEEKAEDKPAEKDEESDDDMGFGLFD) form a disordered region. Residues 63–84 (ASVPSGGAAPAAAAGGAAAGGA) are compositionally biased toward low complexity. The span at 85-95 (AEEKAEDKPAE) shows a compositional bias: basic and acidic residues. Ser100 carries the post-translational modification Phosphoserine; in ribosomal stalk form.

It belongs to the eukaryotic ribosomal protein P1/P2 family. The phosphorylated form is part of the ribosomal stalk involved in the interaction of the elongation factors with the ribosome during protein synthesis. The phosphopantetheinylated form is part of the 10S triacylglycerol biosynthetic complex involved in de novo fatty acid biosynthesis. In terms of processing, 4'-phosphopantetheine is transferred from CoA to a specific serine by acpS. This modification is essential for activity because fatty acids are bound in thioester linkage to the sulfhydryl of the prosthetic group.

The protein localises to the cytoplasm. Probable bifunctional protein. The phosphorylated protein plays an important role in the elongation step of protein synthesis. The phosphopantetheinylated protein acts as an acyl carrier protein. The protein is Large ribosomal subunit protein P2 of Rhodotorula glutinis (Yeast).